Consider the following 294-residue polypeptide: MTSQESIGIKFLFGGLSCMGAAVVSNPVDVLKTRFQIHGEGIDSKSLGLVNGTIKIIKNEGISAMYKGLTPSLLREATYSTLRMGGYDVIKNYFIDSNGKTNLLSKVTSGALSGALGACITSPTDLIKVRMQASSKGVKYDSISSAFKEIIAKEGIKGLWKGVGPTTQRAALLTASQIPSYDHIKHMILDHGIIQVDGLQVHIVSSIFAGLIASITTSPVDLVKTRIMNQPFDSNGVGLIYKSSYDCFKKTFQSEGISGLYKGFLPNWFRIGPHTIVTFILYEYLRKVSGIKPI.

Residues 1 to 10 are Mitochondrial intermembrane-facing; that stretch reads MTSQESIGIK. Solcar repeat units follow at residues 9–93, 101–187, and 197–288; these read IKFL…IKNY, TNLL…IKHM, and DGLQ…LRKV. Residues 11–31 traverse the membrane as a helical segment; that stretch reads FLFGGLSCMGAAVVSNPVDVL. The Mitochondrial matrix portion of the chain corresponds to 32 to 67; sequence KTRFQIHGEGIDSKSLGLVNGTIKIIKNEGISAMYK. Residues 68-88 form a helical membrane-spanning segment; that stretch reads GLTPSLLREATYSTLRMGGYD. Residues 89-106 lie on the Mitochondrial intermembrane side of the membrane; it reads VIKNYFIDSNGKTNLLSK. A helical membrane pass occupies residues 107 to 127; that stretch reads VTSGALSGALGACITSPTDLI. Topologically, residues 128–161 are mitochondrial matrix; it reads KVRMQASSKGVKYDSISSAFKEIIAKEGIKGLWK. Residues 162–182 form a helical membrane-spanning segment; that stretch reads GVGPTTQRAALLTASQIPSYD. Residues 183–192 lie on the Mitochondrial intermembrane side of the membrane; the sequence is HIKHMILDHG. The helical transmembrane segment at 193–213 threads the bilayer; it reads IIQVDGLQVHIVSSIFAGLIA. Over 214 to 267 the chain is Mitochondrial matrix; the sequence is SITTSPVDLVKTRIMNQPFDSNGVGLIYKSSYDCFKKTFQSEGISGLYKGFLPN. The chain crosses the membrane as a helical span at residues 268-285; it reads WFRIGPHTIVTFILYEYL. The Mitochondrial intermembrane portion of the chain corresponds to 286-294; that stretch reads RKVSGIKPI.

Belongs to the mitochondrial carrier (TC 2.A.29) family.

Its subcellular location is the mitochondrion inner membrane. Functionally, mitochondrial solute carriers shuttle metabolites, nucleotides, and cofactors through the mitochondrial inner membrane. The protein is Mitochondrial substrate carrier family protein ucpB (ucpB) of Dictyostelium discoideum (Social amoeba).